The sequence spans 338 residues: Ketol-acid reductoisomerase (NADP(+)) (338 aa).

The KARI N-terminal Rossmann domain occupies 1–181 (MKIYYDKDCN…GGGRAGIIET (181 aa)). NADP(+) is bound by residues 24–27 (YGSQ), lysine 47, serine 50, serine 52, and 82–85 (DEIQ). Residue histidine 107 is part of the active site. An NADP(+)-binding site is contributed by glycine 133. The region spanning 182–327 (SFKEETETDL…ARLRSMMSWI (146 aa)) is the KARI C-terminal knotted domain. Mg(2+) contacts are provided by aspartate 190, glutamate 194, glutamate 226, and glutamate 230. Residue serine 251 coordinates substrate.

It belongs to the ketol-acid reductoisomerase family. Requires Mg(2+) as cofactor.

It catalyses the reaction (2R)-2,3-dihydroxy-3-methylbutanoate + NADP(+) = (2S)-2-acetolactate + NADPH + H(+). It carries out the reaction (2R,3R)-2,3-dihydroxy-3-methylpentanoate + NADP(+) = (S)-2-ethyl-2-hydroxy-3-oxobutanoate + NADPH + H(+). Its pathway is amino-acid biosynthesis; L-isoleucine biosynthesis; L-isoleucine from 2-oxobutanoate: step 2/4. It functions in the pathway amino-acid biosynthesis; L-valine biosynthesis; L-valine from pyruvate: step 2/4. Involved in the biosynthesis of branched-chain amino acids (BCAA). Catalyzes an alkyl-migration followed by a ketol-acid reduction of (S)-2-acetolactate (S2AL) to yield (R)-2,3-dihydroxy-isovalerate. In the isomerase reaction, S2AL is rearranged via a Mg-dependent methyl migration to produce 3-hydroxy-3-methyl-2-ketobutyrate (HMKB). In the reductase reaction, this 2-ketoacid undergoes a metal-dependent reduction by NADPH to yield (R)-2,3-dihydroxy-isovalerate. The chain is Ketol-acid reductoisomerase (NADP(+)) from Geobacter sulfurreducens (strain ATCC 51573 / DSM 12127 / PCA).